The sequence spans 383 residues: Acetylornithine deacetylase (383 aa).

Residue His80 coordinates Zn(2+). Residue Asp82 is part of the active site. Asp112 is a Zn(2+) binding site. The active site involves Glu144. 3 residues coordinate Zn(2+): Glu145, Glu169, and His355.

It belongs to the peptidase M20A family. ArgE subfamily. As to quaternary structure, homodimer. It depends on Zn(2+) as a cofactor. Co(2+) is required as a cofactor. Requires glutathione as cofactor.

It is found in the cytoplasm. It catalyses the reaction N(2)-acetyl-L-ornithine + H2O = L-ornithine + acetate. The protein operates within amino-acid biosynthesis; L-arginine biosynthesis; L-ornithine from N(2)-acetyl-L-ornithine (linear): step 1/1. Catalyzes the hydrolysis of the amide bond of N(2)-acetylated L-amino acids. Cleaves the acetyl group from N-acetyl-L-ornithine to form L-ornithine, an intermediate in L-arginine biosynthesis pathway, and a branchpoint in the synthesis of polyamines. This chain is Acetylornithine deacetylase, found in Salmonella agona (strain SL483).